Here is a 123-residue protein sequence, read N- to C-terminus: WAP four-disulfide core domain protein 5 (123 aa).

The signal sequence occupies residues 1-24 (MRIQSLLLLGVLLAVGSQLPAAFG). 2 WAP domains span residues 27 to 73 (KGEK…CVPR) and 74 to 121 (ISVK…RDPA). 8 cysteine pairs are disulfide-bonded: Cys-34–Cys-62, Cys-41–Cys-66, Cys-49–Cys-61, Cys-55–Cys-70, Cys-81–Cys-109, Cys-88–Cys-113, Cys-96–Cys-108, and Cys-102–Cys-117.

Its subcellular location is the secreted. In terms of biological role, putative acid-stable proteinase inhibitor. This is WAP four-disulfide core domain protein 5 (WFDC5) from Callithrix jacchus (White-tufted-ear marmoset).